Consider the following 526-residue polypeptide: Triacylglycerol lipase OBL1 (526 aa).

Residues 79 to 99 (GHLTDFLLNFYYQNHGFLGIL) form a helical membrane-spanning segment. The GXSXG motif lies at 338–342 (GHSLG). Catalysis depends on Ser-340, which acts as the Nucleophile. Residues Asp-404 and His-497 each act as charge relay system in the active site.

It belongs to the AB hydrolase superfamily. Lipase family.

Its subcellular location is the membrane. It catalyses the reaction a triacylglycerol + H2O = a diacylglycerol + a fatty acid + H(+). Functionally, acid lipase that can hydrolyze a range of triacylglycerols but is not active on phospholipids. In vitro, hydrolyzes triolein, trilinolein, triricinolein, tripalmitin, trilaurin and tricaprin. May play a role in the regulation of lipolysis in germinating seeds. In Ricinus communis (Castor bean), this protein is Triacylglycerol lipase OBL1.